The following is a 305-amino-acid chain: Aurasperone B biosynthesis cluster protein A (305 aa).

Positions 1–26 (MSIFFSIRFWPAAISAAILWLPQVLG) are cleaved as a signal peptide. Residues Asn29, Asn34, Asn64, Asn83, Asn132, Asn183, Asn218, and Asn288 are each glycosylated (N-linked (GlcNAc...) asparagine).

Belongs to the bfoA family.

Its function is as follows. Part of the gene cluster that mediates the biosynthesis of aurasperone B, a dimeric gamma-naphthopyrone. The first step in the biosynthesis of aurasperone B is the production of gamma-naphthopyrone precursor YWA1 by the non-reducing polyketide synthase albA, via condensation of one acetyl-CoA starter unit with 6 malonyl-CoA units. YWA1 is then methylated by aunE at position C-6 to yield foncesin which is further methylated at position C-8 by aunD to produce fonsecin B. A key enzyme in the biosynthetic pathway is the cytochrome P450 monooxygenase aunB which catalyzes the oxidative dimerization of fonsecin B to aurasperone B. AunB also catalyzes the oxidative dimerization of rubrofusarin B into aurasperone A. This is Aurasperone B biosynthesis cluster protein A from Aspergillus niger (strain ATCC 1015 / CBS 113.46 / FGSC A1144 / LSHB Ac4 / NCTC 3858a / NRRL 328 / USDA 3528.7).